A 137-amino-acid chain; its full sequence is Large ribosomal subunit protein uL16 (137 aa).

The protein belongs to the universal ribosomal protein uL16 family. In terms of assembly, part of the 50S ribosomal subunit.

Its function is as follows. Binds 23S rRNA and is also seen to make contacts with the A and possibly P site tRNAs. The protein is Large ribosomal subunit protein uL16 of Acinetobacter baylyi (strain ATCC 33305 / BD413 / ADP1).